A 414-amino-acid chain; its full sequence is 4-hydroxy-3-methylbut-2-en-1-yl diphosphate synthase (flavodoxin) (414 aa).

4 residues coordinate [4Fe-4S] cluster: C304, C307, C350, and E357.

The protein belongs to the IspG family. Requires [4Fe-4S] cluster as cofactor.

The catalysed reaction is (2E)-4-hydroxy-3-methylbut-2-enyl diphosphate + oxidized [flavodoxin] + H2O + 2 H(+) = 2-C-methyl-D-erythritol 2,4-cyclic diphosphate + reduced [flavodoxin]. It functions in the pathway isoprenoid biosynthesis; isopentenyl diphosphate biosynthesis via DXP pathway; isopentenyl diphosphate from 1-deoxy-D-xylulose 5-phosphate: step 5/6. Its function is as follows. Converts 2C-methyl-D-erythritol 2,4-cyclodiphosphate (ME-2,4cPP) into 1-hydroxy-2-methyl-2-(E)-butenyl 4-diphosphate. The sequence is that of 4-hydroxy-3-methylbut-2-en-1-yl diphosphate synthase (flavodoxin) from Aromatoleum aromaticum (strain DSM 19018 / LMG 30748 / EbN1) (Azoarcus sp. (strain EbN1)).